The sequence spans 86 residues: Co-chaperonin GroES (86 aa).

It belongs to the GroES chaperonin family. Heptamer of 7 subunits arranged in a ring. Interacts with the chaperonin GroEL.

Its subcellular location is the cytoplasm. Its function is as follows. Together with the chaperonin GroEL, plays an essential role in assisting protein folding. The GroEL-GroES system forms a nano-cage that allows encapsulation of the non-native substrate proteins and provides a physical environment optimized to promote and accelerate protein folding. GroES binds to the apical surface of the GroEL ring, thereby capping the opening of the GroEL channel. This Sulfurovum sp. (strain NBC37-1) protein is Co-chaperonin GroES.